The following is a 259-amino-acid chain: Snake venom serine protease homolog rhinocerase 2 (259 aa).

Positions 1–17 (VLIRVLANLLLLQLSYA) are cleaved as a signal peptide. Positions 18 to 23 (QESSEL) are excised as a propeptide. The 227-residue stretch at 24-250 (VIGGDECDIN…YTDWIEGIIA (227 aa)) folds into the Peptidase S1 domain. Intrachain disulfides connect C30/C164, C51/C67, C99/C257, C143/C211, C175/C190, and C201/C226. N252 carries N-linked (GlcNAc...) asparagine glycosylation.

This sequence belongs to the peptidase S1 family. Snake venom subfamily. Expressed by the venom gland.

Its subcellular location is the secreted. Its function is as follows. Snake venom serine protease homolog that may act in the hemostasis system of the prey. The sequence is that of Snake venom serine protease homolog rhinocerase 2 from Bitis rhinoceros (West African gaboon viper).